The primary structure comprises 174 residues: CEN-like protein 1 (174 aa).

This sequence belongs to the phosphatidylethanolamine-binding protein family. In terms of tissue distribution, expressed in vegetative axillary meristems but not in the main shoot meristem.

It localises to the cytoplasm. In terms of biological role, may form complexes with phosphorylated ligands by interfering with kinases and their effectors. This Nicotiana tabacum (Common tobacco) protein is CEN-like protein 1 (CET1).